We begin with the raw amino-acid sequence, 440 residues long: MPHPEHNTSVFLLSLGCSKNTVDSERLQAQAEASGITFTQQAEEAEVILINTCGFIEDAKEESIMEILAAVDMKNAGTVRQVYVMGCLTELYRNELQEELPEVDRFFGTRELPAVLDALGARYHQELYDHRSLLTPPHSSYLKIAEGCSRACSFCSIPKIRGRYLSQPMEQLLREARLLQENGVKELNLIAQDITVYGVDLYGKQMLNDLLMRLSDMEFRWIRLLYAYPVGFPLEVIDTIGNRSNICNYLDLPLQHCSDPILRSMNRGITKEQSLRLIEEIRNRNPDIRLRTTMIAGYPGETRKEFEEMLEFAGSVRFDRLGCFPYRHEEHSPAYSLIDTVPEEEKQERVSELMELQEEIARKKNEAFVGSLMTVLVDRPEEGEEGLILIGRTEFDAPEVDNECLLESGSPEPSPGTFVQARITGSTAYELHGTVESLME.

Residues 8–124 (TSVFLLSLGC…VLDALGARYH (117 aa)) enclose the MTTase N-terminal domain. Cys-17, Cys-53, Cys-87, Cys-148, Cys-152, and Cys-155 together coordinate [4Fe-4S] cluster. One can recognise a Radical SAM core domain in the interval 134-363 (LTPPHSSYLK…MELQEEIARK (230 aa)). In terms of domain architecture, TRAM spans 366 to 437 (EAFVGSLMTV…AYELHGTVES (72 aa)).

The protein belongs to the methylthiotransferase family. RimO subfamily. It depends on [4Fe-4S] cluster as a cofactor.

The protein resides in the cytoplasm. It catalyses the reaction L-aspartate(89)-[ribosomal protein uS12]-hydrogen + (sulfur carrier)-SH + AH2 + 2 S-adenosyl-L-methionine = 3-methylsulfanyl-L-aspartate(89)-[ribosomal protein uS12]-hydrogen + (sulfur carrier)-H + 5'-deoxyadenosine + L-methionine + A + S-adenosyl-L-homocysteine + 2 H(+). Catalyzes the methylthiolation of an aspartic acid residue of ribosomal protein uS12. This chain is Ribosomal protein uS12 methylthiotransferase RimO, found in Chlorobium luteolum (strain DSM 273 / BCRC 81028 / 2530) (Pelodictyon luteolum).